The chain runs to 615 residues: Probable methylmalonyl-CoA mutase small subunit (615 aa).

Belongs to the methylmalonyl-CoA mutase family. Heterodimer of an alpha and a beta chain. Adenosylcob(III)alamin serves as cofactor.

It carries out the reaction (R)-methylmalonyl-CoA = succinyl-CoA. Its pathway is metabolic intermediate metabolism; propanoyl-CoA degradation; succinyl-CoA from propanoyl-CoA: step 3/3. In terms of biological role, catalyzes the isomerization of succinyl-CoA to methylmalonyl-CoA during synthesis of propionate from tricarboxylic acid-cycle intermediates. This chain is Probable methylmalonyl-CoA mutase small subunit (mutA), found in Mycobacterium bovis (strain ATCC BAA-935 / AF2122/97).